Here is a 159-residue protein sequence, read N- to C-terminus: Vasotocin-neurophysin VT (159 aa).

The N-terminal stretch at 1–17 (TAPVPACFLCLLALSSA) is a signal peptide. A disulfide bond links Cys-18 and Cys-23. Glycine amide is present on Gly-26. Disulfide bonds link Cys-39–Cys-83, Cys-42–Cys-56, Cys-50–Cys-73, Cys-57–Cys-63, Cys-90–Cys-102, Cys-96–Cys-114, and Cys-103–Cys-108. Asn-129 carries an N-linked (GlcNAc...) asparagine glycan.

This sequence belongs to the vasopressin/oxytocin family. Post-translationally, seven disulfide bonds are present in neurophysin.

The protein localises to the secreted. Its function is as follows. Vasotocin is an antidiuretic hormone. The polypeptide is Vasotocin-neurophysin VT (Bufo japonicus (Japanese common toad)).